A 132-amino-acid chain; its full sequence is uncharacterized protein (132 aa).

Residues Leu-113–Arg-132 form a disordered region.

This is an uncharacterized protein from Saccharomyces cerevisiae (strain ATCC 204508 / S288c) (Baker's yeast).